Consider the following 1415-residue polypeptide: DNA-directed RNA polymerase subunit beta' (1415 aa).

Zn(2+)-binding residues include Cys214, Cys294, Cys301, and Cys304. Over residues Gln1335–Ile1351 the composition is skewed to polar residues. Positions Gln1335 to Leu1390 are disordered.

The protein belongs to the RNA polymerase beta' chain family. RpoC2 subfamily. As to quaternary structure, in cyanobacteria the RNAP catalytic core is composed of 2 alpha, 1 beta, 1 beta', 1 gamma and 1 omega subunit. When a sigma factor is associated with the core the holoenzyme is formed, which can initiate transcription. It depends on Zn(2+) as a cofactor.

The catalysed reaction is RNA(n) + a ribonucleoside 5'-triphosphate = RNA(n+1) + diphosphate. In terms of biological role, DNA-dependent RNA polymerase catalyzes the transcription of DNA into RNA using the four ribonucleoside triphosphates as substrates. In Trichodesmium erythraeum (strain IMS101), this protein is DNA-directed RNA polymerase subunit beta'.